The sequence spans 1592 residues: Laminin subunit gamma-1 (1592 aa).

The signal sequence occupies residues 1–19 (MRAPVLAVLAVLLLGTVRA). Positions 29 to 268 (SPQRCMPEFV…AISDFAVGGR (240 aa)) constitute a Laminin N-terminal domain. Residues N43 and N117 are each glycosylated (N-linked (GlcNAc...) asparagine). 16 disulfides stabilise this stretch: C269–C278, C271–C288, C290–C299, C302–C322, C325–C334, C327–C350, C353–C362, C365–C378, C381–C393, C383–C399, C401–C410, C413–C425, C428–C439, C430–C446, C448–C457, and C460–C475. Laminin EGF-like domains follow at residues 269–324 (CKCN…ECLP), 325–380 (CNCN…PCHA), 381–427 (CQCN…GCRP), and 428–477 (CACN…GCTP). The region spanning 504–672 (SGVEGWTAQQ…AGPSAPWVEI (169 aa)) is the Laminin IV type A domain. Residues N559 and N633 are each glycosylated (N-linked (GlcNAc...) asparagine). 24 disulfide bridges follow: C707–C716, C709–C723, C725–C734, C737–C753, C756–C764, C758–C775, C778–C787, C790–C808, C811–C825, C813–C832, C835–C844, C847–C864, C867–C881, C869–C888, C890–C899, C902–C915, C918–C930, C920–C937, C939–C948, C951–C963, C966–C978, C968–C984, C986–C995, and C998–C1011. Laminin EGF-like domains follow at residues 707-755 (CTCN…DCQP), 756-810 (CPCP…PCRI), 811-866 (CECS…KCRA), 867-917 (CSCN…GCER), 918-965 (CDCH…GCKP), and 966-1013 (CDCD…GCQE). N-linked (GlcNAc...) asparagine glycans are attached at residues N1005, N1041, N1048, N1090, N1144, N1158, N1188, N1206, N1253, N1363, and N1386. The segment at 1013–1592 (ECPACYRLVK…CYNTPIIEKP (580 aa)) is domain II and I. The stretch at 1018-1477 (YRLVKDKVNE…DEKMAEMASN (460 aa)) forms a coiled coil. A compositionally biased stretch (basic and acidic residues) spans 1456 to 1472 (NQLKKKQAEAESDEKMA). Residues 1456-1489 (NQLKKKQAEAESDEKMAEMASNATKDAESNANNS) are disordered. Residues 1476–1489 (SNATKDAESNANNS) show a composition bias toward polar residues. 2 N-linked (GlcNAc...) asparagine glycosylation sites follow: N1477 and N1487. A coiled-coil region spans residues 1515–1579 (VGQLTVLEKT…ANLEDIKNTL (65 aa)).

As to quaternary structure, laminin is a complex glycoprotein, consisting of three different polypeptide chains (alpha, beta, gamma), which are bound to each other by disulfide bonds into a cross-shaped molecule comprising one long and three short arms with globules at each end.

Its subcellular location is the secreted. It localises to the extracellular space. The protein resides in the extracellular matrix. The protein localises to the basement membrane. Functionally, binding to cells via a high affinity receptor, laminin is thought to mediate the attachment, migration and organization of cells into tissues during embryonic development by interacting with other extracellular matrix components. This is Laminin subunit gamma-1 (lamc1) from Xenopus tropicalis (Western clawed frog).